The primary structure comprises 1007 residues: Serine/threonine-protein kinase PRP4 homolog (1007 aa).

The interval 1–102 (MAATEPPSLR…LSPAKRTKLD (102 aa)) is disordered. The residue at position 2 (Ala2) is an N-acetylalanine. Ser8, Ser21, Ser24, and Ser33 each carry phosphoserine. Basic residues-rich tracts occupy residues 40 to 60 (KHSR…KHKH) and 68 to 82 (KKHK…HKRK). Over residues 83–92 (EVIEASDKEG) the composition is skewed to basic and acidic residues. Phosphoserine occurs at positions 88 and 94. Lys100 is modified (N6-acetyllysine; alternate). Residue Lys100 forms a Glycyl lysine isopeptide (Lys-Gly) (interchain with G-Cter in SUMO2); alternate linkage. Lys112 participates in a covalent cross-link: Glycyl lysine isopeptide (Lys-Gly) (interchain with G-Cter in SUMO2). Residue Lys118 forms a Glycyl lysine isopeptide (Lys-Gly) (interchain with G-Cter in SUMO2); alternate linkage. Lys118 is covalently cross-linked (Glycyl lysine isopeptide (Lys-Gly) (interchain with G-Cter in SUMO1); alternate). Position 132 is a phosphoserine (Ser132). Tyr141 bears the Phosphotyrosine mark. 2 disordered regions span residues 141–535 (YESG…EDEE) and 560–583 (NISV…SPDD). Phosphoserine occurs at positions 143, 145, and 167. A compositionally biased stretch (low complexity) spans 158-169 (GNRSSTRSSSTR). Glycyl lysine isopeptide (Lys-Gly) (interchain with G-Cter in SUMO2) cross-links involve residues Lys171 and Lys178. Composition is skewed to basic residues over residues 180–203 (SAKK…RKSK) and 215–231 (RSKS…SKRS). A phosphoserine mark is found at Ser240, Ser242, Ser258, Ser278, Ser292, and Ser294. Over residues 248–271 (RSQEKVGKARSPAEEKMKSEEKGK) the composition is skewed to basic and acidic residues. Residues 294 to 303 (SPVDLRDKSK) are compositionally biased toward basic and acidic residues. Positions 304 to 315 (DRRSRSKERKSK) are enriched in basic residues. Residues 316-325 (RSEIDKEKKP) are compositionally biased toward basic and acidic residues. Ser328, Ser354, Ser356, Ser366, and Ser368 each carry phosphoserine. The segment covering 342–367 (PSRRPGRSPKRRSLSPKLRDKSRRSR) has biased composition (basic residues). Thr385 is subject to Phosphothreonine. Ser387 is subject to Phosphoserine. Basic and acidic residues-rich tracts occupy residues 395–408 (RSLE…ERRR) and 415–429 (RPRD…RSKD). Residues Ser427, Ser431, and Ser437 each carry the phosphoserine modification. The span at 438–497 (PTRRRSRSPIRRRSRSPLRRSRSPRRRSRSPRRRDRSRRSRSRLRRRSRSRGGHRRRSRS) shows a compositional bias: basic residues. 8 positions are modified to phosphoserine: Ser518, Ser519, Ser520, Ser565, Ser569, Ser576, Ser578, and Ser580. Positions 518 to 535 (SSSDDNLEDFDVEEEDEE) are enriched in acidic residues. A compositionally biased stretch (low complexity) spans 562 to 581 (SVPSEPSSPQSSTRSRSPSP). Glycyl lysine isopeptide (Lys-Gly) (interchain with G-Cter in SUMO2) cross-links involve residues Lys593 and Lys659. The 320-residue stretch at 687-1006 (YNVYGYTGQG…ALQHAFIQEK (320 aa)) folds into the Protein kinase domain. ATP is bound by residues 693–701 (TGQGVFSNV) and Lys717. Lys717 carries the N6-acetyllysine modification. The Proton acceptor role is filled by Asp815. Residue Tyr849 is modified to Phosphotyrosine. Phosphoserine is present on Ser852.

The protein belongs to the protein kinase superfamily. CMGC Ser/Thr protein kinase family. As to quaternary structure, interacts with CLK1 C-terminus. Associates with the U5 snRNP and NCOR1 deacetylase complexes. Identified in the spliceosome C complex. Phosphorylated by CLK1. Autophosphorylated; phosphorylation inhibits interaction with its targets, such as PRPF6 or SMARCA4.

The protein resides in the nucleus. The protein localises to the chromosome. Its subcellular location is the centromere. It is found in the kinetochore. It catalyses the reaction L-seryl-[protein] + ATP = O-phospho-L-seryl-[protein] + ADP + H(+). The enzyme catalyses L-threonyl-[protein] + ATP = O-phospho-L-threonyl-[protein] + ADP + H(+). Serine/threonine kinase involved in spliceosomal assembly as well as mitosis and signaling regulation. Connects chromatin mediated regulation of transcription and pre-mRNA splicing. During spliceosomal assembly, interacts with and phosphorylates PRPF6 and PRPF31, components of the U4/U6-U5 tri-small nuclear ribonucleoprotein (snRNP), to facilitate the formation of the spliceosome B complex. Plays a role in regulating transcription and the spindle assembly checkpoint (SAC). Associates with U5 snRNP and NCOR1 deacetylase complexes which may allow a coordination of pre-mRNA splicing with chromatin remodeling events involved in transcriptional regulation. Associates and probably phosphorylates SMARCA4 and NCOR1. Phosphorylates SRSF1. Associates with kinetochores during mitosis and is necessary for recruitment and maintenance of the checkpoint proteins such as MAD1L1 and MAD12L1 at the kinetochores. Phosphorylates and regulates the activity of the transcription factors such as ELK1 and KLF13. Phosphorylates nuclear YAP1 and WWTR1/TAZ which induces nuclear exclusion and regulates Hippo signaling pathway, involved in tissue growth control. In Mus musculus (Mouse), this protein is Serine/threonine-protein kinase PRP4 homolog (Prp4k).